The primary structure comprises 247 residues: Geranylgeranylglyceryl phosphate synthase (247 aa).

Mg(2+) contacts are provided by Asp-23 and Ser-52. Residues 171-177 (YLEAGSG), 203-204 (GG), and 225-226 (GT) contribute to the sn-glycerol 1-phosphate site.

This sequence belongs to the GGGP/HepGP synthase family. Group II subfamily. The cofactor is Mg(2+).

The protein resides in the cytoplasm. The catalysed reaction is sn-glycerol 1-phosphate + (2E,6E,10E)-geranylgeranyl diphosphate = sn-3-O-(geranylgeranyl)glycerol 1-phosphate + diphosphate. Its pathway is membrane lipid metabolism; glycerophospholipid metabolism. Its function is as follows. Prenyltransferase that catalyzes the transfer of the geranylgeranyl moiety of geranylgeranyl diphosphate (GGPP) to the C3 hydroxyl of sn-glycerol-1-phosphate (G1P). This reaction is the first ether-bond-formation step in the biosynthesis of archaeal membrane lipids. The chain is Geranylgeranylglyceryl phosphate synthase from Methanosarcina barkeri (strain Fusaro / DSM 804).